The sequence spans 209 residues: MSRELAEWLGHMGIRDRRVLDAIAELDRARFVPPHLVAEAYADRPLPIGFGQTISQPFVVAFMTEALGLDGGERVLEVGTGSGYQTALLARLAGEVWSVEIVPGLAARARALLLGDLGLANVHLREGDGALGWPEAAPFDRILVTAAAPQVPPPLRAQLAPGGRMVLPVGEAESEQVLRVLERAADGIEEIEDLLPVRFVPLTHLPPAV.

Ser-55 is a catalytic residue.

This sequence belongs to the methyltransferase superfamily. L-isoaspartyl/D-aspartyl protein methyltransferase family.

Its subcellular location is the cytoplasm. The catalysed reaction is [protein]-L-isoaspartate + S-adenosyl-L-methionine = [protein]-L-isoaspartate alpha-methyl ester + S-adenosyl-L-homocysteine. Its function is as follows. Catalyzes the methyl esterification of L-isoaspartyl residues in peptides and proteins that result from spontaneous decomposition of normal L-aspartyl and L-asparaginyl residues. It plays a role in the repair and/or degradation of damaged proteins. This Anaeromyxobacter dehalogenans (strain 2CP-C) protein is Protein-L-isoaspartate O-methyltransferase.